An 852-amino-acid chain; its full sequence is Leucine--tRNA ligase (852 aa).

Residues 41–51 carry the 'HIGH' region motif; it reads PYPSGRIHIGH. Residues 623–627 carry the 'KMSKS' region motif; the sequence is KMSKS. Lys626 contributes to the ATP binding site.

This sequence belongs to the class-I aminoacyl-tRNA synthetase family.

The protein localises to the cytoplasm. The catalysed reaction is tRNA(Leu) + L-leucine + ATP = L-leucyl-tRNA(Leu) + AMP + diphosphate. The protein is Leucine--tRNA ligase of Ruegeria pomeroyi (strain ATCC 700808 / DSM 15171 / DSS-3) (Silicibacter pomeroyi).